The primary structure comprises 312 residues: Pantothenate synthetase (312 aa).

42-49 contacts ATP; it reads MGALHTGH. His49 (proton donor) is an active-site residue. Gln73 lines the (R)-pantoate pocket. Residue Gln73 coordinates beta-alanine. Residue 159-162 participates in ATP binding; the sequence is GEKD. (R)-pantoate is bound at residue Gln165. Residues Val188 and 196–199 each bind ATP; that span reads LSSR.

The protein belongs to the pantothenate synthetase family. As to quaternary structure, homodimer.

The protein localises to the cytoplasm. The catalysed reaction is (R)-pantoate + beta-alanine + ATP = (R)-pantothenate + AMP + diphosphate + H(+). It functions in the pathway cofactor biosynthesis; (R)-pantothenate biosynthesis; (R)-pantothenate from (R)-pantoate and beta-alanine: step 1/1. In terms of biological role, catalyzes the condensation of pantoate with beta-alanine in an ATP-dependent reaction via a pantoyl-adenylate intermediate. The sequence is that of Pantothenate synthetase from Rhodococcus jostii (strain RHA1).